A 114-amino-acid polypeptide reads, in one-letter code: uncharacterized protein (114 aa).

The tract at residues 90 to 114 (VESSQKRKPEESTIGMDAPKKMKRG) is disordered.

This is an uncharacterized protein from Caenorhabditis elegans.